An 848-amino-acid polypeptide reads, in one-letter code: Protein NETWORKED 2C (848 aa).

The 81-residue stretch at 10–90 folds into the NAB domain; the sequence is YSWWWASHVR…ERYDHISKEL (81 aa). The interval 108–141 is disordered; the sequence is FAMNEDDDDDAPVSPRHHKNKTSNKNVPKVPDLP. Coiled-coil stretches lie at residues 172–204, 241–278, 305–454, and 752–797; these read LSKT…SYEN, EAQI…SRKQ, SEKE…KATN, and AKFE…SEEF.

Belongs to the NET family.

Functionally, plant-specific actin binding protein. May be part of a membrane-cytoskeletal adapter complex. The sequence is that of Protein NETWORKED 2C from Arabidopsis thaliana (Mouse-ear cress).